Consider the following 168-residue polypeptide: MAENKPFRGPIRANTDRKANRRGAARLAAVQALYQMDIAGAGINDVLAEFESHWLGNEVEGEQYLPAEAAFFRDIVSGVVRDQTKIDPVLDTALERGWPLQRIEAILRAVLRAGAYELERRKDVPAKVVVSEYVDIAHAFVERDETGMVNAVLEQLARQYRGDEMGPK.

The protein belongs to the NusB family.

Involved in transcription antitermination. Required for transcription of ribosomal RNA (rRNA) genes. Binds specifically to the boxA antiterminator sequence of the ribosomal RNA (rrn) operons. This is Transcription antitermination protein NusB from Bradyrhizobium sp. (strain ORS 278).